The chain runs to 180 residues: ATP-dependent protease subunit HslV (180 aa).

Thr5 is an active-site residue. Residues Gly161, Cys164, and Thr167 each contribute to the Na(+) site.

It belongs to the peptidase T1B family. HslV subfamily. In terms of assembly, a double ring-shaped homohexamer of HslV is capped on each side by a ring-shaped HslU homohexamer. The assembly of the HslU/HslV complex is dependent on binding of ATP.

The protein resides in the cytoplasm. The enzyme catalyses ATP-dependent cleavage of peptide bonds with broad specificity.. With respect to regulation, allosterically activated by HslU binding. Protease subunit of a proteasome-like degradation complex believed to be a general protein degrading machinery. This chain is ATP-dependent protease subunit HslV, found in Campylobacter curvus (strain 525.92).